The chain runs to 290 residues: Fructose-1,6-bisphosphatase class 1 (290 aa).

4 residues coordinate Mg(2+): Glu78, Asp96, Leu98, and Asp99. Substrate contacts are provided by residues 99–102, Tyr201, and Lys226; that span reads DGSS. Mg(2+) is bound at residue Glu232.

It belongs to the FBPase class 1 family. In terms of assembly, homotetramer. Mg(2+) serves as cofactor.

The protein resides in the cytoplasm. It carries out the reaction beta-D-fructose 1,6-bisphosphate + H2O = beta-D-fructose 6-phosphate + phosphate. Its pathway is carbohydrate biosynthesis; gluconeogenesis. In Helicobacter pylori (strain ATCC 700392 / 26695) (Campylobacter pylori), this protein is Fructose-1,6-bisphosphatase class 1.